The chain runs to 289 residues: Glucosamine-6-phosphate deaminase 1 (289 aa).

Lysine 64 is modified (N6-acetyllysine). The active-site Proton acceptor; for enolization step is aspartate 72. The For ring-opening step role is filled by aspartate 141. Histidine 143 acts as the Proton acceptor; for ring-opening step in catalysis. Glutamate 148 functions as the For ring-opening step in the catalytic mechanism. Position 161 is a phosphothreonine (threonine 161).

It belongs to the glucosamine/galactosamine-6-phosphate isomerase family. Homohexamer.

Its subcellular location is the cytoplasm. The catalysed reaction is alpha-D-glucosamine 6-phosphate + H2O = beta-D-fructose 6-phosphate + NH4(+). It functions in the pathway nucleotide-sugar biosynthesis; UDP-N-acetyl-alpha-D-glucosamine biosynthesis; alpha-D-glucosamine 6-phosphate from D-fructose 6-phosphate: step 1/1. With respect to regulation, allosterically activated by N-acetylglucosamine-6-phosphate (GlcNAc6P). Functionally, catalyzes the reversible conversion of alpha-D-glucosamine 6-phosphate (GlcN-6P) into beta-D-fructose 6-phosphate (Fru-6P) and ammonium ion, a regulatory reaction step in de novo uridine diphosphate-N-acetyl-alpha-D-glucosamine (UDP-GlcNAc) biosynthesis via hexosamine pathway. Deamination is coupled to aldo-keto isomerization mediating the metabolic flux from UDP-GlcNAc toward Fru-6P. At high ammonium level can drive amination and isomerization of Fru-6P toward hexosamines and UDP-GlcNAc synthesis. Has a role in fine tuning the metabolic fluctuations of cytosolic UDP-GlcNAc and their effects on hyaluronan synthesis that occur during tissue remodeling. Seems to trigger calcium oscillations in mammalian eggs. These oscillations serve as the essential trigger for egg activation and early development of the embryo. This Bos taurus (Bovine) protein is Glucosamine-6-phosphate deaminase 1.